Consider the following 240-residue polypeptide: Ubiquinone biosynthesis O-methyltransferase (240 aa).

Positions 44, 64, 85, and 129 each coordinate S-adenosyl-L-methionine.

It belongs to the methyltransferase superfamily. UbiG/COQ3 family.

The catalysed reaction is a 3-demethylubiquinol + S-adenosyl-L-methionine = a ubiquinol + S-adenosyl-L-homocysteine + H(+). It carries out the reaction a 3-(all-trans-polyprenyl)benzene-1,2-diol + S-adenosyl-L-methionine = a 2-methoxy-6-(all-trans-polyprenyl)phenol + S-adenosyl-L-homocysteine + H(+). The protein operates within cofactor biosynthesis; ubiquinone biosynthesis. O-methyltransferase that catalyzes the 2 O-methylation steps in the ubiquinone biosynthetic pathway. This chain is Ubiquinone biosynthesis O-methyltransferase, found in Escherichia coli O157:H7.